A 213-amino-acid chain; its full sequence is uncharacterized protein (213 aa).

The first 21 residues, M1–A21, serve as a signal peptide directing secretion.

This is an uncharacterized protein from Rickettsia prowazekii (strain Madrid E).